Here is a 716-residue protein sequence, read N- to C-terminus: Polyribonucleotide nucleotidyltransferase (716 aa).

Positions 485 and 491 each coordinate Mg(2+). Residues 552–611 (PKITTISVPKEKIRDVIGSGGKVIREIVEYSGAKVDIGDDGTVTIAASNDEQAQKAIARI) form the KH domain. The 69-residue stretch at 621–689 (GRIYEGKVVK…DRGKVKLSMR (69 aa)) folds into the S1 motif domain.

It belongs to the polyribonucleotide nucleotidyltransferase family. The cofactor is Mg(2+).

The protein localises to the cytoplasm. It catalyses the reaction RNA(n+1) + phosphate = RNA(n) + a ribonucleoside 5'-diphosphate. In terms of biological role, involved in mRNA degradation. Catalyzes the phosphorolysis of single-stranded polyribonucleotides processively in the 3'- to 5'-direction. This is Polyribonucleotide nucleotidyltransferase from Gluconobacter oxydans (strain 621H) (Gluconobacter suboxydans).